The primary structure comprises 393 residues: Acetylornithine aminotransferase 1 (393 aa).

Residue arginine 131 coordinates N(2)-acetyl-L-ornithine. Pyridoxal 5'-phosphate is bound at residue 215–218; that stretch reads DEVQ. At lysine 244 the chain carries N6-(pyridoxal phosphate)lysine. Threonine 272 serves as a coordination point for N(2)-acetyl-L-ornithine. Threonine 273 serves as a coordination point for pyridoxal 5'-phosphate.

This sequence belongs to the class-III pyridoxal-phosphate-dependent aminotransferase family. ArgD subfamily. In terms of assembly, homodimer. Requires pyridoxal 5'-phosphate as cofactor.

Its subcellular location is the cytoplasm. It catalyses the reaction N(2)-acetyl-L-ornithine + 2-oxoglutarate = N-acetyl-L-glutamate 5-semialdehyde + L-glutamate. Its pathway is amino-acid biosynthesis; L-arginine biosynthesis; N(2)-acetyl-L-ornithine from L-glutamate: step 4/4. The protein is Acetylornithine aminotransferase 1 of Bordetella pertussis (strain Tohama I / ATCC BAA-589 / NCTC 13251).